Consider the following 217-residue polypeptide: Elongation factor Ts (217 aa).

The involved in Mg(2+) ion dislocation from EF-Tu stretch occupies residues 82-85; that stretch reads TDFV.

It belongs to the EF-Ts family.

Its subcellular location is the cytoplasm. Associates with the EF-Tu.GDP complex and induces the exchange of GDP to GTP. It remains bound to the aminoacyl-tRNA.EF-Tu.GTP complex up to the GTP hydrolysis stage on the ribosome. The chain is Elongation factor Ts from Synechococcus sp. (strain RCC307).